Consider the following 1151-residue polypeptide: Sterol regulatory element-binding protein 1 (1151 aa).

The segment at 1–59 (MDEPPFTEAALEQALAEPCELDAALLTDIEDMLQLINNQDSDFPGLFDAPYAGVAGGTD) is transcriptional activation (acidic). Residues 1 to 487 (MDEPPFTEAA…HGRGMLDRSR (487 aa)) lie on the Cytoplasmic side of the membrane. The 9aaTAD motif lies at 27–35 (TDIEDMLQL). Disordered regions lie at residues 39-125 (QDSD…IKEE) and 164-184 (GYPS…TSQT). Residues 57-69 (GTDPTSPDASSPG) show a composition bias toward low complexity. Positions 91–105 (TPPPPPVSPTQPAPT) are enriched in pro residues. A phosphoserine mark is found at Ser-98 and Ser-117. A compositionally biased stretch (polar residues) spans 170–184 (GSFSSATPPGSTSQT). Residues 234–497 (QQVPVLLQPH…LALCVLVFLC (264 aa)) are interaction with LMNA. A bHLH domain is found at 324–374 (EKRTAHNAIEKRYRSSINDKIIELKDLVVGTEAKLNKSAVLRKAIDYIRFL). Ser-338 and Ser-339 each carry phosphoserine; by SIK1. The interval 374–396 (LQQSNQKLKQENLSLRTAAHKSK) is leucine-zipper. Ser-397 carries the phosphoserine; by AMPK modification. The tract at residues 399-479 (KDLVSCSSGG…KPEQLPAPHG (81 aa)) is disordered. Ser-403 carries the post-translational modification Phosphoserine; by SIK1. Over residues 431–448 (DAGSPSQSSPLSLGSRGS) the composition is skewed to low complexity. Ser-457 is modified (phosphoserine). Residues 488–508 (LALCVLVFLCLSCNPLASLMG) traverse the membrane as a helical segment. Over 509–547 (SWALPGPSDATSAYHGPWRSVLGAEGRDGPGWVLWLLPP) the chain is Lumenal. The chain crosses the membrane as a helical span at residues 548 to 568 (LVWLTNGLLVLLFLALLFVYG). The Cytoplasmic segment spans residues 569–1151 (EPVTRPHSDP…LGGGTTVTSS (583 aa)). The tract at residues 987-1006 (RQKPPPPSQASQGSSSGAQA) is disordered. Positions 995 to 1006 (QASQGSSSGAQA) are enriched in low complexity. Ser-1060 is modified (phosphoserine).

This sequence belongs to the SREBP family. Efficient DNA binding of the soluble transcription factor fragment requires dimerization with another bHLH protein. Interacts with CEBPA, the interaction produces a transcriptional synergy. Interacts with LMNA. In terms of assembly, forms a tight complex with SCAP, the SCAP-SREBP complex, in the endoplasmic reticulum membrane and the Golgi apparatus. Interacts with PAQR3; the interaction anchors the SCAP-SREBP complex to the Golgi apparatus in low cholesterol conditions. In terms of processing, processed in the Golgi apparatus, releasing the protein from the membrane. At low cholesterol the SCAP-SREBP complex is recruited into COPII vesicles for export from the endoplasmic reticulum. In the Golgi, complex SREBPs are cleaved sequentially by site-1 (MBTPS1, S1P) and site-2 (MBTPS2, S2P) proteases. The first cleavage by site-1 protease occurs within the luminal loop, the second cleavage by site-2 protease occurs within the first transmembrane domain, releasing the transcription factor from the Golgi membrane. Post-translationally, phosphorylated by AMPK, leading to suppress protein processing and nuclear translocation, and repress target gene expression. Phosphorylation at Ser-403 by SIK1 represses activity possibly by inhibiting DNA-binding. SCAP-free SREBF1 is ubiquitinated by the BCR(ARMC5) complex, leading to its degradation. In terms of processing, ubiquitinated; the nuclear form has a rapid turnover and is rapidly ubiquitinated and degraded by the proteasome in the nucleus.

The protein resides in the endoplasmic reticulum membrane. Its subcellular location is the golgi apparatus membrane. It localises to the cytoplasmic vesicle. It is found in the COPII-coated vesicle membrane. The protein localises to the nucleus. Activation by cleavage is down-regulated upon activation of SIRT3-dependent PRKAA1/AMPK-alpha signaling cascade which leads to inhibition of ATP-consuming lipogenesis to restore cellular energy balance. Precursor of the transcription factor form (Processed sterol regulatory element-binding protein 1), which is embedded in the endoplasmic reticulum membrane. Low sterol concentrations promote processing of this form, releasing the transcription factor form that translocates into the nucleus and activates transcription of genes involved in cholesterol biosynthesis and lipid homeostasis. Functionally, key transcription factor that regulates expression of genes involved in cholesterol biosynthesis and lipid homeostasis. Binds to the sterol regulatory element 1 (SRE-1) (5'-ATCACCCCAC-3'). Has dual sequence specificity binding to both an E-box motif (5'-ATCACGTGA-3') and to SRE-1 (5'-ATCACCCCAC-3'). Regulates the promoters of genes involved in cholesterol biosynthesis and the LDL receptor (LDLR) pathway of sterol regulation. The sequence is that of Sterol regulatory element-binding protein 1 (SREBF1) from Sus scrofa (Pig).